Reading from the N-terminus, the 106-residue chain is UPF0145 protein azo0572 (106 aa).

This sequence belongs to the UPF0145 family.

This chain is UPF0145 protein azo0572, found in Azoarcus sp. (strain BH72).